A 202-amino-acid polypeptide reads, in one-letter code: Phosphatidyl-N-methylethanolamine N-methyltransferase (202 aa).

The Lumenal portion of the chain corresponds to 1 to 12 (MTTLSDYVDFSQ). Residues 13-33 (DSFKYAALSIAFNPIFWNVVA) constitute an intramembrane region (helical). At 34-45 (RAEYRSHFLTRI) the chain is on the lumenal side. The chain crosses the membrane as a helical span at residues 46-66 (FGSPYRGCYFLAITIFSLGIL). The Cytoplasmic portion of the chain corresponds to 67–90 (RDHIYQQALEDQPYYAPVHQPVLG). A helical membrane pass occupies residues 91–111 (GALFAVGSVLVLSSMYALGVT). S-adenosyl-L-methionine is bound at residue 95–97 (AVG). Residues 112 to 154 (GTYLGDYFGILMDAPVTGFPFNVTGSPMYWGSTLNFLGVALYK) are Lumenal-facing. The chain crosses the membrane as a helical span at residues 155–175 (GKVAGILLTALVFVLYWFALK). The Cytoplasmic segment spans residues 176-202 (WEDPFTAEIYAKRERERAKSKRGGKNQ). 177–178 (ED) is an S-adenosyl-L-methionine binding site.

This sequence belongs to the class VI-like SAM-binding methyltransferase superfamily. PEMT/PEM2 methyltransferase family.

The protein localises to the endoplasmic reticulum membrane. Its subcellular location is the mitochondrion membrane. The catalysed reaction is a 1,2-diacyl-sn-glycero-3-phospho-N-methylethanolamine + S-adenosyl-L-methionine = a 1,2-diacyl-sn-glycero-3-phospho-N,N-dimethylethanolamine + S-adenosyl-L-homocysteine + H(+). The enzyme catalyses a 1,2-diacyl-sn-glycero-3-phospho-N,N-dimethylethanolamine + S-adenosyl-L-methionine = a 1,2-diacyl-sn-glycero-3-phosphocholine + S-adenosyl-L-homocysteine + H(+). It functions in the pathway phospholipid metabolism; phosphatidylcholine biosynthesis. In terms of biological role, catalyzes the second two steps of the methylation pathway of phosphatidylcholine biosynthesis, the SAM-dependent methylation of phosphatidylmonomethylethanolamine (PMME) to phosphatidyldimethylethanolamine (PDME) and of PDME to phosphatidylcholine (PC). This chain is Phosphatidyl-N-methylethanolamine N-methyltransferase, found in Emericella nidulans (strain FGSC A4 / ATCC 38163 / CBS 112.46 / NRRL 194 / M139) (Aspergillus nidulans).